The chain runs to 2187 residues: Nascent polypeptide-associated complex subunit alpha, muscle-specific form (2187 aa).

Disordered stretches follow at residues 1–20, 32–73, and 172–196; these read MPGE…PQPQ, LKVA…STPF, and IPPL…KGTA. The span at 9-20 shows a compositional bias: polar residues; the sequence is VPATEQELPQPQ. Residues 178-192 show a composition bias toward polar residues; it reads KTSTSQVPSQGTLNL. At Arg247 the chain carries Asymmetric dimethylarginine. 5 disordered regions span residues 335-370, 579-611, 738-835, 884-1847, and 1892-2053; these read DSGA…LSPK, NTVS…SPLV, PKGS…PKDT, KETL…PVEK, and PEAV…KAMS. The segment covering 347-369 has biased composition (polar residues); that stretch reads SAVTNELCSPPGSSNVAGTSLSP. Residue Thr590 is modified to Phosphothreonine. Composition is skewed to polar residues over residues 599 to 609, 818 to 835, and 887 to 905; these read AKNTAPSTTSP, VTPT…PKDT, and LATS…TPKS. Ser822 carries the phosphoserine modification. The segment covering 941–951 has biased composition (pro residues); it reads PHVPPTSPPKS. Over residues 976 to 998 the composition is skewed to low complexity; the sequence is TPTYPKKSPKPAASKKTPATPSP. The segment covering 1106–1122 has biased composition (polar residues); it reads TPQNATPNESLAASSQK. Phosphoserine is present on residues Ser1174 and Ser1177. Residues 1174-1195 are compositionally biased toward low complexity; it reads SPLSPKKASKTAAPKEAPATPS. A Phosphothreonine modification is found at Thr1364. A phosphoserine mark is found at Ser1368 and Ser1392. Position 1398 is a phosphothreonine (Thr1398). Phosphoserine is present on residues Ser1400 and Ser1423. Polar residues predominate over residues 1429-1440; it reads VTPSSKKLSQTV. The segment covering 1489–1504 has biased composition (low complexity); that stretch reads SPSSPKKAPKTAAPPS. At Ser1492 the chain carries Phosphoserine. Residues 1609-1631 are compositionally biased toward polar residues; it reads PVTTSLAQTAPPSLQKAPSTTIP. Low complexity-rich tracts occupy residues 1636-1670 and 1714-1727; these read AAPA…TAPK and SSPP…KRAS. Polar residues predominate over residues 1762–1772; it reads ACSTGTTTPQA. Composition is skewed to low complexity over residues 1806 to 1823 and 1892 to 1914; these read KSPG…CPDP and PEAV…LAPS. Positions 1950–1954 match the PXLXP motif; sequence PPLIP. The segment covering 1973 to 1983 has biased composition (pro residues); sequence APKPAGTPAPA. Positions 2001 to 2014 are enriched in acidic residues; sequence SDSDESVPELEEQD. A Phosphoserine; by ILK1 modification is found at Ser2015. The segment covering 2016-2029 has biased composition (low complexity); it reads TQTATQQAQLAAAA. Positions 2041–2052 are required for DNA-binding; it reads QSRSEKKARKAM. Positions 2042 to 2107 constitute an NAC-A/B domain; sequence SRSEKKARKA…AKIEDLSQQA (66 aa). Ser2104 bears the Phosphoserine mark. Lys2114 is subject to N6-acetyllysine; alternate. Lys2114 participates in a covalent cross-link: Glycyl lysine isopeptide (Lys-Gly) (interchain with G-Cter in SUMO2); alternate. The residue at position 2131 (Thr2131) is a Phosphothreonine; by GSK3-beta. A Phosphothreonine modification is found at Thr2133. Phosphoserine occurs at positions 2138, 2158, 2163, and 2175. Positions 2148-2185 constitute a UBA domain; the sequence is VEVKDIELVMSQANVSRAKAVRALKNNSNDIVNAIMEL.

Belongs to the NAC-alpha family. As to quaternary structure, interacts (via PXLXP motif) with the muscle-restricted histone methyltransferase SMYD1 (via MYND-type zinc finger). Phosphorylation of Ser-2015 by ILK during cell adhesion may promote nuclear localization. Phosphorylation of Thr-2131 by GSK3B may promote proteasome mediated degradation. Specifically expressed in heart and skeletal muscle: it is present in differentiated myotubes but not in myoblasts.

It is found in the cytoplasm. It localises to the nucleus. Cardiac- and muscle-specific transcription factor. May act to regulate the expression of genes involved in the development of myotubes. Plays a critical role in ventricular cardiomyocyte expansion and regulates postnatal skeletal muscle growth and regeneration. Involved in the organized assembly of thick and thin filaments of myofibril sarcomeres. This chain is Nascent polypeptide-associated complex subunit alpha, muscle-specific form (Naca), found in Mus musculus (Mouse).